Reading from the N-terminus, the 398-residue chain is 4-hydroxy-3-methylbut-2-en-1-yl diphosphate synthase (ferredoxin) (398 aa).

Cysteine 306, cysteine 309, cysteine 340, and glutamate 347 together coordinate [4Fe-4S] cluster.

Belongs to the IspG family. Requires [4Fe-4S] cluster as cofactor.

The catalysed reaction is (2E)-4-hydroxy-3-methylbut-2-enyl diphosphate + 2 oxidized [2Fe-2S]-[ferredoxin] + H2O = 2-C-methyl-D-erythritol 2,4-cyclic diphosphate + 2 reduced [2Fe-2S]-[ferredoxin] + H(+). The protein operates within isoprenoid biosynthesis; isopentenyl diphosphate biosynthesis via DXP pathway; isopentenyl diphosphate from 1-deoxy-D-xylulose 5-phosphate: step 5/6. Functionally, converts 2C-methyl-D-erythritol 2,4-cyclodiphosphate (ME-2,4cPP) into 1-hydroxy-2-methyl-2-(E)-butenyl 4-diphosphate. In Parasynechococcus marenigrum (strain WH8102), this protein is 4-hydroxy-3-methylbut-2-en-1-yl diphosphate synthase (ferredoxin).